We begin with the raw amino-acid sequence, 77 residues long: Conotoxin King-Kong 2 (77 aa).

A signal peptide spans 1 to 22 (MKLTCMMIVAVLFLTAWTFVTA). Residues 23 to 49 (DDSGNGLENLFSKAHHEMKNPEASNLN) constitute a propeptide that is removed on maturation. Intrachain disulfides connect Cys52/Cys67, Cys59/Cys71, and Cys66/Cys76. Cys76 is subject to Cysteine amide.

Belongs to the conotoxin O1 superfamily. In terms of tissue distribution, expressed by the venom duct.

It is found in the secreted. This is Conotoxin King-Kong 2 from Conus textile (Cloth-of-gold cone).